We begin with the raw amino-acid sequence, 141 residues long: Large ribosomal subunit protein bL17 (141 aa).

The protein belongs to the bacterial ribosomal protein bL17 family. Part of the 50S ribosomal subunit. Contacts protein L32.

This chain is Large ribosomal subunit protein bL17, found in Maridesulfovibrio salexigens (strain ATCC 14822 / DSM 2638 / NCIMB 8403 / VKM B-1763) (Desulfovibrio salexigens).